We begin with the raw amino-acid sequence, 250 residues long: Indole-3-glycerol phosphate synthase (250 aa).

The protein belongs to the TrpC family.

It catalyses the reaction 1-(2-carboxyphenylamino)-1-deoxy-D-ribulose 5-phosphate + H(+) = (1S,2R)-1-C-(indol-3-yl)glycerol 3-phosphate + CO2 + H2O. It functions in the pathway amino-acid biosynthesis; L-tryptophan biosynthesis; L-tryptophan from chorismate: step 4/5. This is Indole-3-glycerol phosphate synthase from Bacillus velezensis (strain DSM 23117 / BGSC 10A6 / LMG 26770 / FZB42) (Bacillus amyloliquefaciens subsp. plantarum).